The primary structure comprises 285 residues: 4-hydroxybenzoate octaprenyltransferase (285 aa).

The next 7 membrane-spanning stretches (helical) occupy residues 33-53 (FLAA…LGVV), 93-113 (LILF…MNTL), 134-154 (ITYL…PMAY), 166-186 (WLLF…YAMV), 209-229 (LMIG…GIQL), 233-253 (SLYN…QWLI), and 265-285 (FLNN…SVLI).

The protein belongs to the UbiA prenyltransferase family. Mg(2+) serves as cofactor.

The protein localises to the cell inner membrane. It catalyses the reaction all-trans-octaprenyl diphosphate + 4-hydroxybenzoate = 4-hydroxy-3-(all-trans-octaprenyl)benzoate + diphosphate. The protein operates within cofactor biosynthesis; ubiquinone biosynthesis. Its function is as follows. Catalyzes the prenylation of para-hydroxybenzoate (PHB) with an all-trans polyprenyl group. Mediates the second step in the final reaction sequence of ubiquinone-8 (UQ-8) biosynthesis, which is the condensation of the polyisoprenoid side chain with PHB, generating the first membrane-bound Q intermediate 3-octaprenyl-4-hydroxybenzoate. The sequence is that of 4-hydroxybenzoate octaprenyltransferase from Aliivibrio salmonicida (strain LFI1238) (Vibrio salmonicida (strain LFI1238)).